Here is a 228-residue protein sequence, read N- to C-terminus: uncharacterized protein (228 aa).

The N-terminal stretch at 1–28 (MRKKRVITCVMAASLTLGSLLPAGYASA) is a signal peptide.

This is an uncharacterized protein from Bacillus subtilis (strain 168).